Consider the following 423-residue polypeptide: UPF0229 protein PLES_05841 (423 aa).

The segment at 84-107 is disordered; the sequence is AGEHIARPSGGGGGRGGGKASNSG. Over residues 92 to 102 the composition is skewed to gly residues; sequence SGGGGGRGGGK.

This sequence belongs to the UPF0229 family.

This Pseudomonas aeruginosa (strain LESB58) protein is UPF0229 protein PLES_05841.